The chain runs to 154 residues: Myoglobin (154 aa).

Residues 2-148 enclose the Globin domain; that stretch reads GLSDGEWQLV…FRKDMASNYK (147 aa). Serine 4 is subject to Phosphoserine. Histidine 65 is a binding site for nitrite. Residue histidine 65 participates in O2 binding. Position 68 is a phosphothreonine (threonine 68). A heme b-binding site is contributed by histidine 94.

The protein belongs to the globin family. Monomeric.

Its subcellular location is the cytoplasm. The protein localises to the sarcoplasm. It catalyses the reaction Fe(III)-heme b-[protein] + nitric oxide + H2O = Fe(II)-heme b-[protein] + nitrite + 2 H(+). The enzyme catalyses H2O2 + AH2 = A + 2 H2O. In terms of biological role, monomeric heme protein which primary function is to store oxygen and facilitate its diffusion within muscle tissues. Reversibly binds oxygen through a pentacoordinated heme iron and enables its timely and efficient release as needed during periods of heightened demand. Depending on the oxidative conditions of tissues and cells, and in addition to its ability to bind oxygen, it also has a nitrite reductase activity whereby it regulates the production of bioactive nitric oxide. Under stress conditions, like hypoxia and anoxia, it also protects cells against reactive oxygen species thanks to its pseudoperoxidase activity. The polypeptide is Myoglobin (MB) (Pan troglodytes (Chimpanzee)).